A 159-amino-acid polypeptide reads, in one-letter code: Trafficking protein particle complex subunit 6A (159 aa).

Ser-33 carries the post-translational modification Phosphoserine.

It belongs to the TRAPP small subunits family. BET3 subfamily. Part of the multisubunit transport protein particle (TRAPP) complex. Heterodimer with TRAPPC3. The heterodimer TRAPPC3-TRAPPC6A interacts with TRAPPC2L. Interacts with TRAPPC2L.

It is found in the golgi apparatus. The protein resides in the cis-Golgi network. The protein localises to the endoplasmic reticulum. Its function is as follows. May play a role in vesicular transport during the biogenesis of melanosomes. The polypeptide is Trafficking protein particle complex subunit 6A (Bos taurus (Bovine)).